Here is a 255-residue protein sequence, read N- to C-terminus: Malonyl-[acyl-carrier protein] O-methyltransferase (255 aa).

This sequence belongs to the methyltransferase superfamily.

It carries out the reaction malonyl-[ACP] + S-adenosyl-L-methionine = malonyl-[ACP] methyl ester + S-adenosyl-L-homocysteine. It functions in the pathway cofactor biosynthesis; biotin biosynthesis. Its function is as follows. Converts the free carboxyl group of a malonyl-thioester to its methyl ester by transfer of a methyl group from S-adenosyl-L-methionine (SAM). It allows to synthesize pimeloyl-ACP via the fatty acid synthetic pathway. In Acinetobacter baylyi (strain ATCC 33305 / BD413 / ADP1), this protein is Malonyl-[acyl-carrier protein] O-methyltransferase.